The chain runs to 269 residues: Indole-3-glycerol phosphate synthase (269 aa).

It belongs to the TrpC family.

It catalyses the reaction 1-(2-carboxyphenylamino)-1-deoxy-D-ribulose 5-phosphate + H(+) = (1S,2R)-1-C-(indol-3-yl)glycerol 3-phosphate + CO2 + H2O. The protein operates within amino-acid biosynthesis; L-tryptophan biosynthesis; L-tryptophan from chorismate: step 4/5. The sequence is that of Indole-3-glycerol phosphate synthase from Roseiflexus sp. (strain RS-1).